We begin with the raw amino-acid sequence, 215 residues long: High frequency lysogenization protein HflD homolog (215 aa).

It belongs to the HflD family.

The protein localises to the cytoplasm. It is found in the cell inner membrane. This Haemophilus ducreyi (strain 35000HP / ATCC 700724) protein is High frequency lysogenization protein HflD homolog.